We begin with the raw amino-acid sequence, 195 residues long: Large ribosomal subunit protein uL5 (195 aa).

The protein belongs to the universal ribosomal protein uL5 family. Part of the 50S ribosomal subunit; part of the 5S rRNA/L5/L18/L25 subcomplex. Contacts the 5S rRNA and the P site tRNA. Forms a bridge to the 30S subunit in the 70S ribosome.

In terms of biological role, this is one of the proteins that bind and probably mediate the attachment of the 5S RNA into the large ribosomal subunit, where it forms part of the central protuberance. In the 70S ribosome it contacts protein S13 of the 30S subunit (bridge B1b), connecting the 2 subunits; this bridge is implicated in subunit movement. Contacts the P site tRNA; the 5S rRNA and some of its associated proteins might help stabilize positioning of ribosome-bound tRNAs. The protein is Large ribosomal subunit protein uL5 of Leifsonia xyli subsp. xyli (strain CTCB07).